Reading from the N-terminus, the 130-residue chain is Small ribosomal subunit protein uS9 (130 aa).

The protein belongs to the universal ribosomal protein uS9 family.

This is Small ribosomal subunit protein uS9 from Anaeromyxobacter dehalogenans (strain 2CP-1 / ATCC BAA-258).